The chain runs to 477 residues: 3-succinoylsemialdehyde-pyridine dehydrogenase (477 aa).

202–208 (GDGPGVG) provides a ligand contact to NAD(+). Residues Glu246 and Cys280 contribute to the active site.

This sequence belongs to the aldehyde dehydrogenase family.

The catalysed reaction is 4-oxo-4-(pyridin-3-yl)butanal + NADP(+) + H2O = 4-oxo-4-(pyridin-3-yl)butanoate + NADPH + 2 H(+). Its pathway is alkaloid degradation; nicotine degradation. Catalyzes the dehydrogenation of 3-succinoylsemialdehyde-pyridine to 3-succinoyl-pyridine in the nicotine degradation pathway. This Pseudomonas sp protein is 3-succinoylsemialdehyde-pyridine dehydrogenase (ald).